The primary structure comprises 164 residues: Protein-export protein SecB (164 aa).

Belongs to the SecB family. In terms of assembly, homotetramer, a dimer of dimers. One homotetramer interacts with 1 SecA dimer.

It localises to the cytoplasm. In terms of biological role, one of the proteins required for the normal export of preproteins out of the cell cytoplasm. It is a molecular chaperone that binds to a subset of precursor proteins, maintaining them in a translocation-competent state. It also specifically binds to its receptor SecA. In Burkholderia orbicola (strain MC0-3), this protein is Protein-export protein SecB.